The primary structure comprises 161 residues: Allophycocyanin alpha chain (161 aa).

Position 71 is an N4-methylasparagine (Asn71). Cys81 lines the (2R,3E)-phycocyanobilin pocket.

This sequence belongs to the phycobiliprotein family. Heterodimer of an alpha and a beta chain. Post-translationally, contains one covalently linked phycocyanobilin chromophore.

The protein localises to the plastid. Its subcellular location is the chloroplast thylakoid membrane. Its function is as follows. Light-harvesting photosynthetic bile pigment-protein from the phycobiliprotein complex. Allophycocyanin has a maximum absorption at approximately 650 nanometers. This is Allophycocyanin alpha chain (apcA) from Porphyra purpurea (Red seaweed).